The primary structure comprises 336 residues: Sex determination protein tasselseed-2 (336 aa).

59–83 is a binding site for NAD(+); the sequence is IVTGGARGIGEAIVRLFAKHGARVV. Residue Ser194 participates in substrate binding. The active-site Proton acceptor is Tyr207.

It belongs to the short-chain dehydrogenases/reductases (SDR) family.

In terms of biological role, required for stage-specific floral organ abortion. This Zea mays (Maize) protein is Sex determination protein tasselseed-2 (TS2).